Reading from the N-terminus, the 291-residue chain is Acetyl-coenzyme A carboxylase carboxyl transferase subunit beta (291 aa).

The region spanning 29-291 is the CoA carboxyltransferase N-terminal domain; sequence IMTKCPDCKK…TGGDLEWLEN (263 aa). Zn(2+)-binding residues include cysteine 33, cysteine 36, cysteine 52, and cysteine 55. Residues 33-55 form a C4-type zinc finger; sequence CPDCKKIMLTKELDKNLRVCMNC.

The protein belongs to the AccD/PCCB family. Acetyl-CoA carboxylase is a heterohexamer composed of biotin carboxyl carrier protein (AccB), biotin carboxylase (AccC) and two subunits each of ACCase subunit alpha (AccA) and ACCase subunit beta (AccD). Requires Zn(2+) as cofactor.

It localises to the cytoplasm. The catalysed reaction is N(6)-carboxybiotinyl-L-lysyl-[protein] + acetyl-CoA = N(6)-biotinyl-L-lysyl-[protein] + malonyl-CoA. It participates in lipid metabolism; malonyl-CoA biosynthesis; malonyl-CoA from acetyl-CoA: step 1/1. In terms of biological role, component of the acetyl coenzyme A carboxylase (ACC) complex. Biotin carboxylase (BC) catalyzes the carboxylation of biotin on its carrier protein (BCCP) and then the CO(2) group is transferred by the transcarboxylase to acetyl-CoA to form malonyl-CoA. The polypeptide is Acetyl-coenzyme A carboxylase carboxyl transferase subunit beta (Bacillus licheniformis (strain ATCC 14580 / DSM 13 / JCM 2505 / CCUG 7422 / NBRC 12200 / NCIMB 9375 / NCTC 10341 / NRRL NRS-1264 / Gibson 46)).